A 706-amino-acid chain; its full sequence is Elongation factor G (706 aa).

One can recognise a tr-type G domain in the interval 15 to 291 (LKTRNIGISA…GVLDYLASPV (277 aa)). Residues 24-31 (AHIDSGKT), 91-95 (DTPGH), and 145-148 (NKLD) contribute to the GTP site.

This sequence belongs to the TRAFAC class translation factor GTPase superfamily. Classic translation factor GTPase family. EF-G/EF-2 subfamily.

Its subcellular location is the cytoplasm. Its function is as follows. Catalyzes the GTP-dependent ribosomal translocation step during translation elongation. During this step, the ribosome changes from the pre-translocational (PRE) to the post-translocational (POST) state as the newly formed A-site-bound peptidyl-tRNA and P-site-bound deacylated tRNA move to the P and E sites, respectively. Catalyzes the coordinated movement of the two tRNA molecules, the mRNA and conformational changes in the ribosome. The sequence is that of Elongation factor G from Leptospira borgpetersenii serovar Hardjo-bovis (strain JB197).